Consider the following 453-residue polypeptide: Pentatricopeptide repeat-containing protein At2g38420, mitochondrial (453 aa).

The transit peptide at 1 to 77 (MARSSSWHRM…CEPTPQAYRF (77 aa)) directs the protein to the mitochondrion. PPR repeat units lie at residues 107-141 (PESI…RCVP), 142-177 (SAYT…GVRL), 178-212 (EEST…SVIV), 213-249 (DPRL…RFSP), 250-284 (GLRD…RVEP), 285-319 (DLVC…GLAP), 320-354 (DVYT…GSEP), 355-389 (NVVT…GVNR), and 390-424 (NSHT…NVFV).

The protein belongs to the PPR family. P subfamily.

The protein localises to the mitochondrion. This is Pentatricopeptide repeat-containing protein At2g38420, mitochondrial from Arabidopsis thaliana (Mouse-ear cress).